Here is a 214-residue protein sequence, read N- to C-terminus: Redox-sensing transcriptional repressor Rex (214 aa).

A DNA-binding region (H-T-H motif) is located at residues 17-56 (LYYRIFKRFHADQVEKASSKQIADAMGIDSATVRRDFSYF). 91–96 (GCGNIG) is an NAD(+) binding site.

The protein belongs to the transcriptional regulatory Rex family. In terms of assembly, homodimer.

Its subcellular location is the cytoplasm. Its function is as follows. Modulates transcription in response to changes in cellular NADH/NAD(+) redox state. The chain is Redox-sensing transcriptional repressor Rex from Streptococcus pyogenes serotype M12 (strain MGAS9429).